A 217-amino-acid polypeptide reads, in one-letter code: Probable transaldolase (217 aa).

K85 acts as the Schiff-base intermediate with substrate in catalysis.

This sequence belongs to the transaldolase family. Type 3B subfamily.

The protein resides in the cytoplasm. The catalysed reaction is D-sedoheptulose 7-phosphate + D-glyceraldehyde 3-phosphate = D-erythrose 4-phosphate + beta-D-fructose 6-phosphate. The protein operates within carbohydrate degradation; pentose phosphate pathway; D-glyceraldehyde 3-phosphate and beta-D-fructose 6-phosphate from D-ribose 5-phosphate and D-xylulose 5-phosphate (non-oxidative stage): step 2/3. Functionally, transaldolase is important for the balance of metabolites in the pentose-phosphate pathway. The polypeptide is Probable transaldolase (Brachyspira hyodysenteriae (strain ATCC 49526 / WA1)).